Consider the following 210-residue polypeptide: MARALVLLSVVLVSLLVNQGRASDNQRLFNNAVIRVQHLHQLAAKMINDFEDSLLPEERRQLSKIFPLSFCNSDYIEAPTGKDETQKSSMLKLLRISFRLIESWEYPSQTLSGTVSNSLTAGNPNQITEKLADLKMGINVLIKGSLDGQPNIDDNDSLPLPFEDFYLTMGENNLRESFRLLACFKKDMHKVETYLRVANCRRSLDSNCTL.

Residues 1–22 (MARALVLLSVVLVSLLVNQGRA) form the signal peptide. His38 provides a ligand contact to Zn(2+). Cys71 and Cys183 are disulfide-bonded. Position 192 (Glu192) interacts with Zn(2+). Cys200 and Cys208 are disulfide-bonded.

The protein belongs to the somatotropin/prolactin family.

It is found in the secreted. Its function is as follows. Growth hormone plays an important role in growth control and is involved in the regulation of several anabolic processes. Implicated as an osmoregulatory substance important for seawater adaptation. The sequence is that of Somatotropin-2 (gh2) from Carassius auratus (Goldfish).